The chain runs to 127 residues: Photosystem II extrinsic protein U (127 aa).

Positions 1 to 31 (MSRLFRRLSTLLLCSLLVLGVWLTQPLSVQA) are cleaved as a signal peptide.

Belongs to the PsbU family. As to quaternary structure, PSII is composed of 1 copy each of membrane proteins PsbA, PsbB, PsbC, PsbD, PsbE, PsbF, PsbH, PsbI, PsbJ, PsbK, PsbL, PsbM, PsbT, PsbX, PsbY, PsbZ, Psb30/Ycf12, peripheral proteins PsbO, CyanoQ (PsbQ), PsbU, PsbV and a large number of cofactors. It forms dimeric complexes.

The protein localises to the cellular thylakoid membrane. Functionally, one of the extrinsic, lumenal subunits of photosystem II (PSII). PSII is a light-driven water plastoquinone oxidoreductase, using light energy to abstract electrons from H(2)O, generating a proton gradient subsequently used for ATP formation. The extrinsic proteins stabilize the structure of photosystem II oxygen-evolving complex (OEC), the ion environment of oxygen evolution and protect the OEC against heat-induced inactivation. In Synechococcus sp. (strain RCC307), this protein is Photosystem II extrinsic protein U.